Reading from the N-terminus, the 416-residue chain is Multifunctional CCA protein (416 aa).

Residues Gly-8 and Arg-11 each coordinate ATP. Positions 8 and 11 each coordinate CTP. Residues Glu-21 and Asp-23 each contribute to the Mg(2+) site. ATP-binding residues include Arg-91, Arg-137, and Arg-140. CTP contacts are provided by Arg-91, Arg-137, and Arg-140. The HD domain occupies Thr-228–Trp-329.

Belongs to the tRNA nucleotidyltransferase/poly(A) polymerase family. Bacterial CCA-adding enzyme type 1 subfamily. In terms of assembly, monomer. Can also form homodimers and oligomers. Requires Mg(2+) as cofactor. Ni(2+) serves as cofactor.

It carries out the reaction a tRNA precursor + 2 CTP + ATP = a tRNA with a 3' CCA end + 3 diphosphate. It catalyses the reaction a tRNA with a 3' CCA end + 2 CTP + ATP = a tRNA with a 3' CCACCA end + 3 diphosphate. Functionally, catalyzes the addition and repair of the essential 3'-terminal CCA sequence in tRNAs without using a nucleic acid template. Adds these three nucleotides in the order of C, C, and A to the tRNA nucleotide-73, using CTP and ATP as substrates and producing inorganic pyrophosphate. tRNA 3'-terminal CCA addition is required both for tRNA processing and repair. Also involved in tRNA surveillance by mediating tandem CCA addition to generate a CCACCA at the 3' terminus of unstable tRNAs. While stable tRNAs receive only 3'-terminal CCA, unstable tRNAs are marked with CCACCA and rapidly degraded. This is Multifunctional CCA protein from Photorhabdus laumondii subsp. laumondii (strain DSM 15139 / CIP 105565 / TT01) (Photorhabdus luminescens subsp. laumondii).